A 223-amino-acid chain; its full sequence is Deoxyribose-phosphate aldolase (223 aa).

The active-site Proton donor/acceptor is the D89. K152 (schiff-base intermediate with acetaldehyde) is an active-site residue. Residue K181 is the Proton donor/acceptor of the active site.

Belongs to the DeoC/FbaB aldolase family. DeoC type 1 subfamily.

It localises to the cytoplasm. It catalyses the reaction 2-deoxy-D-ribose 5-phosphate = D-glyceraldehyde 3-phosphate + acetaldehyde. It participates in carbohydrate degradation; 2-deoxy-D-ribose 1-phosphate degradation; D-glyceraldehyde 3-phosphate and acetaldehyde from 2-deoxy-alpha-D-ribose 1-phosphate: step 2/2. Catalyzes a reversible aldol reaction between acetaldehyde and D-glyceraldehyde 3-phosphate to generate 2-deoxy-D-ribose 5-phosphate. This Bacillus cereus (strain ZK / E33L) protein is Deoxyribose-phosphate aldolase.